The sequence spans 145 residues: Antiholin-like protein LrgA (145 aa).

4 helical membrane-spanning segments follow: residues 10–30, 33–53, 72–92, and 96–116; these read PAHF…SKII, FMPI…VLLC, NIGL…GVIS, and FLII…TGYV.

Belongs to the CidA/LrgA family. LrgA subfamily.

The protein localises to the cell membrane. Its function is as follows. Inhibits the expression or activity of extracellular murein hydrolases by interacting, possibly with LrgB, with the holin-like proteins CidA and/or CidB. The LrgAB and CidAB proteins may affect the proton motive force of the membrane. May be involved in programmed cell death (PCD), possibly triggering PCD in response to antibiotics and environmental stresses. This chain is Antiholin-like protein LrgA, found in Staphylococcus aureus (strain JH1).